Consider the following 474-residue polypeptide: 3-isopropylmalate dehydratase large subunit (474 aa).

Residues Cys355, Cys415, and Cys418 each contribute to the [4Fe-4S] cluster site.

It belongs to the aconitase/IPM isomerase family. LeuC type 1 subfamily. Heterodimer of LeuC and LeuD. Requires [4Fe-4S] cluster as cofactor.

The catalysed reaction is (2R,3S)-3-isopropylmalate = (2S)-2-isopropylmalate. It participates in amino-acid biosynthesis; L-leucine biosynthesis; L-leucine from 3-methyl-2-oxobutanoate: step 2/4. Functionally, catalyzes the isomerization between 2-isopropylmalate and 3-isopropylmalate, via the formation of 2-isopropylmaleate. This chain is 3-isopropylmalate dehydratase large subunit, found in Shewanella sp. (strain MR-4).